The following is a 342-amino-acid chain: tRNA dimethylallyltransferase (342 aa).

39–46 (GPTGSGKT) is an ATP binding site. Position 41–46 (41–46 (TGSGKT)) interacts with substrate. Residues 64 to 67 (DSMQ) form an interaction with substrate tRNA region.

It belongs to the IPP transferase family. In terms of assembly, monomer. Mg(2+) serves as cofactor.

It carries out the reaction adenosine(37) in tRNA + dimethylallyl diphosphate = N(6)-dimethylallyladenosine(37) in tRNA + diphosphate. Catalyzes the transfer of a dimethylallyl group onto the adenine at position 37 in tRNAs that read codons beginning with uridine, leading to the formation of N6-(dimethylallyl)adenosine (i(6)A). This is tRNA dimethylallyltransferase from Chlamydia felis (strain Fe/C-56) (Chlamydophila felis).